The following is a 509-amino-acid chain: Subtelomeric hrmA-associated cluster protein AFUA_5G14880 (509 aa).

Functionally, part of the subtelomeric hrmA-associated cluster (HAC) containing genes that alter the hyphal surface (such as reduced total chitin or increased beta-glucan exposure) and perturb inter-hyphal interactions within the developing biofilms, resulting in a loss of vertically aligned polarized growing filaments. Consequently, this hypoxia-typic morphotype (called H-MORPH) with altered biofilm architecture leads to increased hypoxia fitness, increased host inflammation, rapid disease progression, and mortality in a murine model of invasive aspergillosis. This Aspergillus fumigatus (strain ATCC MYA-4609 / CBS 101355 / FGSC A1100 / Af293) (Neosartorya fumigata) protein is Subtelomeric hrmA-associated cluster protein AFUA_5G14880.